Consider the following 405-residue polypeptide: Glucose-1-phosphate adenylyltransferase 1 (405 aa).

Alpha-D-glucose 1-phosphate contacts are provided by residues tyrosine 96, glycine 161, glutamate 176–lysine 177, and serine 194.

This sequence belongs to the bacterial/plant glucose-1-phosphate adenylyltransferase family. As to quaternary structure, homotetramer.

It carries out the reaction alpha-D-glucose 1-phosphate + ATP + H(+) = ADP-alpha-D-glucose + diphosphate. It participates in glycan biosynthesis; glycogen biosynthesis. Involved in the biosynthesis of ADP-glucose, a building block required for the elongation reactions to produce glycogen. Catalyzes the reaction between ATP and alpha-D-glucose 1-phosphate (G1P) to produce pyrophosphate and ADP-Glc. In Vibrio vulnificus (strain CMCP6), this protein is Glucose-1-phosphate adenylyltransferase 1.